Reading from the N-terminus, the 49-residue chain is Large ribosomal subunit protein bL33B (49 aa).

This sequence belongs to the bacterial ribosomal protein bL33 family.

This is Large ribosomal subunit protein bL33B from Acholeplasma laidlawii (strain PG-8A).